Consider the following 20-residue polypeptide: Trypsin inhibitor A chain (20 aa).

This sequence belongs to the protease inhibitor I3 (leguminous Kunitz-type inhibitor) family. In terms of assembly, heterodimer of an 'A' and a 'B' chain linked by a disulfide bond.

Its function is as follows. Inhibits trypsin and alpha-chymotrypsin. In Albizia julibrissin (Silk tree), this protein is Trypsin inhibitor A chain.